We begin with the raw amino-acid sequence, 317 residues long: Aspartate carbamoyltransferase catalytic subunit (317 aa).

Residues Arg-64 and Thr-65 each contribute to the carbamoyl phosphate site. Lys-92 contributes to the L-aspartate binding site. 3 residues coordinate carbamoyl phosphate: Arg-114, His-144, and Gln-147. L-aspartate contacts are provided by Arg-177 and Arg-232. Residues Gly-273 and Pro-274 each contribute to the carbamoyl phosphate site.

This sequence belongs to the aspartate/ornithine carbamoyltransferase superfamily. ATCase family. In terms of assembly, heterododecamer (2C3:3R2) of six catalytic PyrB chains organized as two trimers (C3), and six regulatory PyrI chains organized as three dimers (R2).

It carries out the reaction carbamoyl phosphate + L-aspartate = N-carbamoyl-L-aspartate + phosphate + H(+). Its pathway is pyrimidine metabolism; UMP biosynthesis via de novo pathway; (S)-dihydroorotate from bicarbonate: step 2/3. Catalyzes the condensation of carbamoyl phosphate and aspartate to form carbamoyl aspartate and inorganic phosphate, the committed step in the de novo pyrimidine nucleotide biosynthesis pathway. This chain is Aspartate carbamoyltransferase catalytic subunit, found in Thiobacillus denitrificans (strain ATCC 25259 / T1).